The chain runs to 165 residues: MTTTRHRLLATASRFVTTLESLDVDAMLAVRSPTCLHHMCLPSFRNYSITNDQTREAFPQWKATITKYQFGILDDSQTLVDEQARKVMIRAKTAAETTVGDYNNEYVFILRMTEDCDTVDEIWEFYDSLRLRDLHHRLEGGHVPIGVDAPAPFTTTGSNSLDRSK.

The protein belongs to the trt14 isomerase family. In terms of assembly, homodimer.

It functions in the pathway secondary metabolite biosynthesis; terpenoid biosynthesis. Part of the gene cluster that mediates the biosynthesis of calidodehydroaustin, a fungal meroterpenoid. The first step of the pathway is the synthesis of 3,5-dimethylorsellinic acid by the polyketide synthase ausA. 3,5-dimethylorsellinic acid is then prenylated by the polyprenyl transferase ausN. Further epoxidation by the FAD-dependent monooxygenase ausM and cyclization by the probable terpene cyclase ausL lead to the formation of protoaustinoid A. Protoaustinoid A is then oxidized to spiro-lactone preaustinoid A3 by the combined action of the FAD-binding monooxygenases ausB and ausC, and the dioxygenase ausE. Acid-catalyzed keto-rearrangement and ring contraction of the tetraketide portion of preaustinoid A3 by ausJ lead to the formation of preaustinoid A4. The aldo-keto reductase ausK, with the help of ausH, is involved in the next step by transforming preaustinoid A4 into isoaustinone which is in turn hydroxylated by the P450 monooxygenase ausI to form austinolide. The cytochrome P450 monooxygenase ausG modifies austinolide to austinol. Austinol is further acetylated to austin by the O-acetyltransferase ausP, which spontaneously changes to dehydroaustin. The cytochrome P450 monooxygenase ausR then converts dehydroaustin is into 7-dehydrodehydroaustin. The hydroxylation catalyzed by ausR permits the O-acetyltransferase ausQ to add an additional acetyl group to the molecule, leading to the formation of acetoxydehydroaustin. The short chain dehydrogenase ausT catalyzes the reduction of the double bond present between carbon atoms 1 and 2 to convert 7-dehydrodehydroaustin into 1,2-dihydro-7-hydroxydehydroaustin. AusQ catalyzes not only an acetylation reaction but also the addition of the PKS ausV diketide product to 1,2-dihydro-7-hydroxydehydroaustin, forming precalidodehydroaustin. Finally, the iron/alpha-ketoglutarate-dependent dioxygenase converts precalidodehydroaustin into calidodehydroaustin. The chain is Austinoid biosynthesis cluster protein J from Aspergillus calidoustus.